The following is a 504-amino-acid chain: Maturase K (504 aa).

This sequence belongs to the intron maturase 2 family. MatK subfamily.

The protein localises to the plastid. It is found in the chloroplast. In terms of biological role, usually encoded in the trnK tRNA gene intron. Probably assists in splicing its own and other chloroplast group II introns. This is Maturase K from Kokia drynarioides (Hawaiian tree cotton).